Reading from the N-terminus, the 888-residue chain is Endochitinase A1 (888 aa).

An N-terminal signal peptide occupies residues 1 to 22 (MVSSKLSFVATAVAALAPLASA). One can recognise a GH18 domain in the interval 29 to 338 (SNLAIYWGQG…DHMKDILLHC (310 aa)). E174 (proton donor) is an active-site residue. 3 disordered regions span residues 338 to 631 (CDPS…TTTA), 743 to 799 (PVTE…VSTS), and 813 to 855 (PLIL…YTQE). The segment covering 344–617 (VTSSSAIPSS…STDESSTTVG (274 aa)) has biased composition (low complexity). N-linked (GlcNAc...) asparagine glycosylation is present at N622. The segment covering 764-775 (EGSNPTQPSGAS) has biased composition (polar residues). N780 is a glycosylation site (N-linked (GlcNAc...) asparagine). Positions 835-855 (PSGQNSGSSSHVPIPPSYTQE) are enriched in polar residues. G863 carries GPI-anchor amidated glycine lipidation. Positions 864–888 (AASRVTGLGHGLVLTVLTLSAFFVL) are cleaved as a propeptide — removed in mature form.

Belongs to the glycosyl hydrolase 18 family. Chitinase class III subfamily.

The protein resides in the cell membrane. The protein localises to the secreted. Its subcellular location is the cell wall. It carries out the reaction Random endo-hydrolysis of N-acetyl-beta-D-glucosaminide (1-&gt;4)-beta-linkages in chitin and chitodextrins.. With respect to regulation, the cyclic peptide natural product argifin acts as a specific inhibitor. Functionally, GPI-anchored chitinase involved in the degradation of chitin, a component of the cell walls of fungi and exoskeletal elements of some animals (including worms and arthropods). Required to reshape the cell wall at the sites where cell wall remodeling and/or cell wall maturation actively take place such as sites of conidia formation. The sequence is that of Endochitinase A1 (chiA1) from Aspergillus fumigatus (strain ATCC MYA-4609 / CBS 101355 / FGSC A1100 / Af293) (Neosartorya fumigata).